The following is a 266-amino-acid chain: Diphthine synthase (266 aa).

Residues L9, D84, V87, S112–I113, L169, A210, and H235 each bind S-adenosyl-L-methionine.

This sequence belongs to the diphthine synthase family. Homodimer.

It carries out the reaction 2-[(3S)-amino-3-carboxypropyl]-L-histidyl-[translation elongation factor 2] + 3 S-adenosyl-L-methionine = diphthine-[translation elongation factor 2] + 3 S-adenosyl-L-homocysteine + 3 H(+). It participates in protein modification; peptidyl-diphthamide biosynthesis. Its function is as follows. S-adenosyl-L-methionine-dependent methyltransferase that catalyzes the trimethylation of the amino group of the modified target histidine residue in translation elongation factor 2 (EF-2), to form an intermediate called diphthine. The three successive methylation reactions represent the second step of diphthamide biosynthesis. The polypeptide is Diphthine synthase (Methanosarcina acetivorans (strain ATCC 35395 / DSM 2834 / JCM 12185 / C2A)).